The primary structure comprises 309 residues: Ribose-phosphate pyrophosphokinase (309 aa).

Residues 37–39 and 96–97 contribute to the ATP site; these read DGE and RQ. H130 and D169 together coordinate Mg(2+). K192 is an active-site residue. Residues R194, D218, and 222 to 226 contribute to the D-ribose 5-phosphate site; that span reads DTAGT.

It belongs to the ribose-phosphate pyrophosphokinase family. Class I subfamily. As to quaternary structure, homohexamer. The cofactor is Mg(2+).

Its subcellular location is the cytoplasm. It carries out the reaction D-ribose 5-phosphate + ATP = 5-phospho-alpha-D-ribose 1-diphosphate + AMP + H(+). The protein operates within metabolic intermediate biosynthesis; 5-phospho-alpha-D-ribose 1-diphosphate biosynthesis; 5-phospho-alpha-D-ribose 1-diphosphate from D-ribose 5-phosphate (route I): step 1/1. Its function is as follows. Involved in the biosynthesis of the central metabolite phospho-alpha-D-ribosyl-1-pyrophosphate (PRPP) via the transfer of pyrophosphoryl group from ATP to 1-hydroxyl of ribose-5-phosphate (Rib-5-P). The sequence is that of Ribose-phosphate pyrophosphokinase from Helicobacter hepaticus (strain ATCC 51449 / 3B1).